The primary structure comprises 203 residues: CS5 fimbrial subunit (203 aa).

A signal peptide spans 1–22; the sequence is MKKNLLITSVLAMATVSGSVLA.

The protein resides in the fimbrium. Major subunit of fimbriae. Fimbriae (also called pili), are polar filaments radiating from the surface of the bacterium to a length of 0.5-1.5 micrometers and numbering 100-300 per cell. They enable bacteria to colonize the epithelium of specific host organs. The protein is CS5 fimbrial subunit of Escherichia coli.